We begin with the raw amino-acid sequence, 213 residues long: Protein ORF D (213 aa).

This is Protein ORF D from Elephas maximus (Indian elephant).